The chain runs to 518 residues: MIPDVSQALAWLEKHPQALKGIQRGLERETLRVNADGTLATTGHPEALGSALTHKWITTDFAEALLEFITPVDGDIEHMLTFMRDLHRYTARNMGDERMWPLSMPCYIAEGQDIELAQYGTSNTGRFKTLYREGLKNRYGALMQTISGVHYNFSLPMAFWQAKCGDISGADAKEKISAGYFRVIRNYYRFGWVIPYLFGASPAICSSFLQGKPTSLPFEKTECGMYYLPYATSLRLSDLGYTNKSQSNLGITFNDLYEYVAGLKQAIKTPSEEYAKIGIDKDGKRLQINSNVLQIENELYAPIRPKRVTRSGESPSDALLRGGIEYIEVRSLDINPFSPIGVDEQQVRFLDLFMVWCALADAPEMSSSELACTRVNWNRVILEGRKPGLTLGIGCETAQFPLPQVGKDLFRDLKRVAQTLDSINGGEAYQKVCDELVACFDNPDLTFSARILRSMIDTGIGGTGKAFAEAYRNLLREEPLEILREEDFVAEREASERRQQEMEAADTEPFAVWLEKHA.

It belongs to the glutamate--cysteine ligase type 1 family. Type 1 subfamily.

It catalyses the reaction L-cysteine + L-glutamate + ATP = gamma-L-glutamyl-L-cysteine + ADP + phosphate + H(+). It functions in the pathway sulfur metabolism; glutathione biosynthesis; glutathione from L-cysteine and L-glutamate: step 1/2. The protein is Glutamate--cysteine ligase of Escherichia coli O157:H7.